The following is a 193-amino-acid chain: MEVNLLQYEQKYHNYIVAGVDEAGRGSLVGPVVASAVIIDKVDIISGIKDSKKLSKNKRDILYEQITSNYVWSTAIIEHTEIDDINILEATKKACTIAVANLSLKPEKILVDGNMKFSDVRFISIINGDNLSLSIAAASIIAKVTRDRLMLELSAEYPQYLWHKNYGYGTREHIEAINTHGLSSYHRKSFKFC.

Positions 15-193 (YIVAGVDEAG…SYHRKSFKFC (179 aa)) constitute an RNase H type-2 domain. 3 residues coordinate a divalent metal cation: Asp-21, Glu-22, and Asp-112.

This sequence belongs to the RNase HII family. It depends on Mn(2+) as a cofactor. Requires Mg(2+) as cofactor.

It is found in the cytoplasm. It catalyses the reaction Endonucleolytic cleavage to 5'-phosphomonoester.. Its function is as follows. Endonuclease that specifically degrades the RNA of RNA-DNA hybrids. This chain is Ribonuclease HII, found in Rickettsia typhi (strain ATCC VR-144 / Wilmington).